The primary structure comprises 200 residues: WASH complex subunit 3 (200 aa).

The stretch at 56-76 (SLRIQQIETTLSILEAKLASI) forms a coiled coil. Disordered stretches follow at residues 87–130 (VRAP…AENI) and 165–200 (DPNLLDTPDAAVPDASKKRLEEQDDDSSGSESSFSD).

It belongs to the CCDC53 family. In terms of assembly, component of the WASH complex.

This is WASH complex subunit 3 from Danio rerio (Zebrafish).